A 191-amino-acid polypeptide reads, in one-letter code: Peptidyl-tRNA hydrolase (191 aa).

TRNA is bound at residue Y17. H22 (proton acceptor) is an active-site residue. TRNA is bound by residues Y68, N70, and N116.

It belongs to the PTH family. As to quaternary structure, monomer.

The protein localises to the cytoplasm. The enzyme catalyses an N-acyl-L-alpha-aminoacyl-tRNA + H2O = an N-acyl-L-amino acid + a tRNA + H(+). Its function is as follows. Hydrolyzes ribosome-free peptidyl-tRNAs (with 1 or more amino acids incorporated), which drop off the ribosome during protein synthesis, or as a result of ribosome stalling. Functionally, catalyzes the release of premature peptidyl moieties from peptidyl-tRNA molecules trapped in stalled 50S ribosomal subunits, and thus maintains levels of free tRNAs and 50S ribosomes. In Francisella tularensis subsp. tularensis (strain FSC 198), this protein is Peptidyl-tRNA hydrolase.